A 413-amino-acid chain; its full sequence is Ribulose bisphosphate carboxylase large chain (413 aa).

2 residues coordinate substrate: Asn-100 and Thr-150. Lys-152 (proton acceptor) is an active-site residue. Position 154 (Lys-154) interacts with substrate. Lys-178, Asp-180, and Glu-181 together coordinate Mg(2+). The residue at position 178 (Lys-178) is an N6-carboxylysine. His-271 functions as the Proton acceptor in the catalytic mechanism. Substrate contacts are provided by Arg-272, His-304, and Ser-356.

Belongs to the RuBisCO large chain family. Type I subfamily. In terms of assembly, heterohexadecamer of 8 large chains and 8 small chains; disulfide-linked. The disulfide link is formed within the large subunit homodimers. Requires Mg(2+) as cofactor. Post-translationally, the disulfide bond which can form in the large chain dimeric partners within the hexadecamer appears to be associated with oxidative stress and protein turnover.

It localises to the plastid. The protein resides in the chloroplast. The enzyme catalyses 2 (2R)-3-phosphoglycerate + 2 H(+) = D-ribulose 1,5-bisphosphate + CO2 + H2O. It carries out the reaction D-ribulose 1,5-bisphosphate + O2 = 2-phosphoglycolate + (2R)-3-phosphoglycerate + 2 H(+). Its function is as follows. RuBisCO catalyzes two reactions: the carboxylation of D-ribulose 1,5-bisphosphate, the primary event in carbon dioxide fixation, as well as the oxidative fragmentation of the pentose substrate in the photorespiration process. Both reactions occur simultaneously and in competition at the same active site. The polypeptide is Ribulose bisphosphate carboxylase large chain (rbcL) (Adiantum pedatum (Northern maidenhair fern)).